A 158-amino-acid polypeptide reads, in one-letter code: Transcription elongation factor GreA (158 aa).

This sequence belongs to the GreA/GreB family.

In terms of biological role, necessary for efficient RNA polymerase transcription elongation past template-encoded arresting sites. The arresting sites in DNA have the property of trapping a certain fraction of elongating RNA polymerases that pass through, resulting in locked ternary complexes. Cleavage of the nascent transcript by cleavage factors such as GreA or GreB allows the resumption of elongation from the new 3'terminus. GreA releases sequences of 2 to 3 nucleotides. In Wigglesworthia glossinidia brevipalpis, this protein is Transcription elongation factor GreA.